A 990-amino-acid chain; its full sequence is MAEAERPAGKEYTTISEVSGPLMVVEGVEGAKYGEVVEVETPTGEVRRGQVLEARRDAAVVQVFEGTSGLDTTSTKVRFTGETLRIPVSTDLLGRILNGRGEPIDGGPEIVPEDELDIHGAPINPAARKYPSDFIQTGISAIDGMNTLVRGQKLPIFSGSGLPHNELAAQIARQATVPGEEEEFAVVFAAMGITHEEAAFFRREFEETGALDRAVLILNLADDPSMERIITPRIALTVAEYLAFENDMHVLVILTDMTNYCFAPGTRVITASGDVVEIDEIVERAAETAVDGGLREGSTEVTVGVTNVRTLAAWDGDLTSNDVVAVEKIEAPSRAVRVRTRSGAELVVSEDHKFLVDTEDGPRMVEASELKSGDELYSVRELRVSEKVPTYLELLLEAEDKFYVHPTEEFEEAVAERYGSLAEACREKELPYRAREAKERRYYELSEFARLATAVIESVDEATEYIDYVTAGGRKRVKFSSPRPGKEVMYVAGLIASDGSVDTERGFVMFSNTERELLSAFEEIVTEEFGVDASKTENQNGVTMLRVNSRVLARVFERLADPKTVLKMPRELVAAYLAGYVDGDGHLKDGKIVITTADRERAGDLQLLLKRLGVPSVLRERDGAYDVVVTGHDAAELAEELPLRHPKKAEAAASMSSGRRSSRFDRVSRRFGRLLREVRRKYGVRASDLGSSSTISQIESGERRATRRLALEIVERLEEVVGDVEEVRELRELAEGNYVLDEVVEVETVEYEHEYLYDVTVVPDHTLVVENGIITSNCEALREISAAREEVPGRRGYPGYMYTDLATIYERAGCIRGRKGSITQMPILTMPHDDITHPIPDLTGYITEGQIVLSRDLHRRGIYPPIDVLPSLSRLMDEGIGKGKTREDHPDLSNQLYAAYAEGRDLRDLVAVVGEEALTERDRKFLKFADEFEQRFVKQGRDENRSIEETLDLGWELLAILPERELKRVSDELIEKYHPKYRQKKEEQEE.

The region spanning 491-614 (VAGLIASDGS…LQLLLKRLGV (124 aa)) is the DOD-type homing endonuclease domain.

Belongs to the ATPase alpha/beta chains family. Has multiple subunits with at least A(3), B(3), C, D, E, F, H, I and proteolipid K(x). This protein undergoes a protein self splicing that involves a post-translational excision of the VDE intervening region (intein) followed by peptide ligation.

It localises to the cell membrane. Its function is as follows. Component of the A-type ATP synthase that produces ATP from ADP in the presence of a proton gradient across the membrane. The B chain is a regulatory subunit. The polypeptide is A-type ATP synthase subunit B (Methanopyrus kandleri (strain AV19 / DSM 6324 / JCM 9639 / NBRC 100938)).